A 268-amino-acid polypeptide reads, in one-letter code: Acyl-CoA-binding domain-containing protein 4 (268 aa).

The 90-residue stretch at 12–101 (CQKQFQAAVS…MKLVAQKVID (90 aa)) folds into the ACB domain. An acyl-CoA contacts are provided by residues 23–32 (IQNLPKNGSY), 43–47 (YSYYK), Lys69, and Tyr88. Residues 151–175 (AVSEPPCLPKEPAPPSPESHSPRDL) are disordered. The span at 156 to 167 (PCLPKEPAPPSP) shows a compositional bias: pro residues. Phosphoserine is present on residues Ser166 and Ser171.

Binds medium- and long-chain acyl-CoA esters and may function as an intracellular carrier of acyl-CoA esters. This Homo sapiens (Human) protein is Acyl-CoA-binding domain-containing protein 4 (ACBD4).